A 402-amino-acid chain; its full sequence is 2-pyrone synthase (402 aa).

Acetoacetyl-CoA-binding residues include K60, R63, C169, L272, R274, G310, R312, and A313. C169 is a catalytic residue.

Belongs to the thiolase-like superfamily. Chalcone/stilbene synthases family. In terms of tissue distribution, expressed in both vegetative and reproductive organs. The expression is strong in the leaf, scape (the inflorescence stem) and corolla (both in the ligule and the unpigmented tube), moderate in the bract and carpel, detectable in the root and pappus but not detectable in the stamen.

The enzyme catalyses 2 malonyl-CoA + acetyl-CoA + 2 H(+) = triacetate lactone + 2 CO2 + 3 CoA. Its function is as follows. Polyketide synthase, which uses acetyl-CoA and two condensation reactions with malonyl-CoA to form triacetic acid lactone (also called methylpyrone), a precursor of phytoalexin. May participate in insect and pathogen resistance. This is 2-pyrone synthase from Gerbera hybrida (Daisy).